Consider the following 236-residue polypeptide: Bacterial rhodopsin CSR3 (236 aa).

Over 1–3 (MDA) the chain is Extracellular. The chain crosses the membrane as a helical span at residues 4–25 (VAVVYGITAAGFAVGVAIVGYL). Over 26–34 (YASLEGSEE) the chain is Cytoplasmic. Residues 35–56 (RSILAALALIPGFAGISYVAMA) traverse the membrane as a helical segment. The Extracellular segment spans residues 57–70 (FGIGTVTIGETTLV). Residues 71 to 92 (GFRYLDWVVTTPLLVGFVGYAA) traverse the membrane as a helical segment. Residues 93–95 (GAS) lie on the Cytoplasmic side of the membrane. A helical transmembrane segment spans residues 96 to 118 (RRAIFGVMVADALMILTGVGAVV). At 119–122 (ADGT) the chain is on the extracellular side. A helical transmembrane segment spans residues 123-150 (LKWVLFGVSTVFHVSLFAYLYLVFPRSV). The Cytoplasmic portion of the chain corresponds to 151–153 (PDD). A helical transmembrane segment spans residues 154–181 (PQRIGLFSLLKNHIGLLWIAYPLVWLAG). Over 182–189 (PEGLGLAT) the chain is Extracellular. A helical membrane pass occupies residues 190–222 (YVGVSITYAFLDLLAKVPYVYFFYARRQVFATK). Lysine 205 is subject to N6-(retinylidene)lysine. Residues 223-236 (LLRDSGEVTATPAD) are Cytoplasmic-facing.

The protein belongs to the archaeal/bacterial/fungal opsin family.

Its subcellular location is the cell membrane. This is Bacterial rhodopsin CSR3 from Haloarcula vallismortis (Halobacterium vallismortis).